We begin with the raw amino-acid sequence, 428 residues long: Stromal membrane-associated protein 2 (428 aa).

The Arf-GAP domain maps to 13-139 (QAVLANLLLE…INVLRKEKDD (127 aa)). The C4-type zinc-finger motif lies at 28-51 (CADCQSKGPRWASWNIGVFICIRC). Residues serine 127, serine 219, serine 224, serine 230, and serine 239 each carry the phosphoserine modification. Residues 163–231 (MPQKKEDAQL…SVSRKAVGSM (69 aa)) are interaction with clathrin heavy chains. Residues 218–262 (PSPSSVSRKAVGSMPTAGSAGSVPENLNLFPEPGSKSEETGKKQL) form a disordered region. Basic and acidic residues predominate over residues 252–262 (SKSEETGKKQL). The interaction with PICALM stretch occupies residues 339 to 428 (MGGMQASMMG…NQTLSPQMWK (90 aa)).

In terms of assembly, interacts with ARF1. Interacts with PICALM and clathrin heavy chains.

The protein resides in the cytoplasm. In terms of biological role, GTPase activating protein that acts on ARF1. Can also activate ARF6 (in vitro). May play a role in clathrin-dependent retrograde transport from early endosomes to the trans-Golgi network. This Mus musculus (Mouse) protein is Stromal membrane-associated protein 2 (Smap2).